The primary structure comprises 289 residues: ATP synthase gamma chain (289 aa).

The protein belongs to the ATPase gamma chain family. As to quaternary structure, F-type ATPases have 2 components, CF(1) - the catalytic core - and CF(0) - the membrane proton channel. CF(1) has five subunits: alpha(3), beta(3), gamma(1), delta(1), epsilon(1). CF(0) has three main subunits: a, b and c.

It is found in the cell inner membrane. Functionally, produces ATP from ADP in the presence of a proton gradient across the membrane. The gamma chain is believed to be important in regulating ATPase activity and the flow of protons through the CF(0) complex. The sequence is that of ATP synthase gamma chain from Haemophilus influenzae (strain PittGG).